Consider the following 722-residue polypeptide: Probable C-mannosyltransferase DPY19L4 (722 aa).

Residues 1-34 (MAKEEGTSVEPRQRKKQRTSGSQEAKAEKIRRTP) are disordered. Position 2 is an N-acetylalanine (Ala2). Over residues 25-34 (AKAEKIRRTP) the composition is skewed to basic and acidic residues. 12 consecutive transmembrane segments (helical) span residues 51 to 71 (IVIG…YLSA), 160 to 177 (VYFY…YVTA), 183 to 201 (WLMS…WFLI), 246 to 262 (FCYL…MMVW), 268 to 284 (VLFL…IFSV), 291 to 307 (YEVY…GYLL), 313 to 331 (ALLV…LVKC), 351 to 369 (FYLL…KMFV), 420 to 440 (LLPF…QVFF), 465 to 485 (IIYH…MEGL), 487 to 507 (FIWT…PELW), and 521 to 541 (PMLL…LSLW).

This sequence belongs to the dpy-19 family.

Its subcellular location is the membrane. Probable C-mannosyltransferase that mediates C-mannosylation of tryptophan residues on target proteins. The sequence is that of Probable C-mannosyltransferase DPY19L4 (Dpy19l4) from Mus musculus (Mouse).